Reading from the N-terminus, the 262-residue chain is LysM domain-containing protein ARB_03438 (262 aa).

A signal peptide spans 1–22; sequence MVSIPLILGAIILLGTRKAATA. Positions 31-75 constitute a LysM 1 domain; it reads FAVTAATDDTCQSLGAQWGIGMAQFLKWNPGVNCNALVAGKTYCL. The tract at residues 85–112 is disordered; sequence TASLTPSPQVPTTSRATQTMTSKASTGT. Residues 86 to 112 are compositionally biased toward polar residues; the sequence is ASLTPSPQVPTTSRATQTMTSKASTGT. One can recognise a LysM 2 domain in the interval 132–179; it reads FYHPVSPGDTCQSIVDRYKAFTLDQFYTWNPSVGKNCESLWLGYYVCT. Residues 184–240 form a disordered region; it reads GPNSPSQQPPSQQPPSQQSPSQQSPSQQSPSQQPPSQQPPSQQPPSQQSNTSQQTQP. Positions 197-214 are enriched in low complexity; it reads PPSQQSPSQQSPSQQSPS. A compositionally biased stretch (pro residues) spans 215-226; that stretch reads QQPPSQQPPSQQ. Over residues 227 to 240 the composition is skewed to low complexity; that stretch reads PPSQQSNTSQQTQP. Asn233 is a glycosylation site (N-linked (GlcNAc...) asparagine).

The protein localises to the secreted. Functionally, might have a role in sequestration of chitin oligosaccharides (breakdown products of fungal cell walls that are released during invasion and act as triggers of host immunity) to dampen host defense. This is LysM domain-containing protein ARB_03438 from Arthroderma benhamiae (strain ATCC MYA-4681 / CBS 112371) (Trichophyton mentagrophytes).